The following is a 463-amino-acid chain: Fumarate hydratase class II (463 aa).

Substrate-binding positions include 98–100, 129–132, 139–141, and threonine 187; these read SGT, HPND, and SSN. The segment at 121 to 141 is disordered; sequence KKGGKSPVHPNDHVNKGQSSN. The active-site Proton donor/acceptor is the histidine 188. Serine 318 is a catalytic residue. Residues serine 319 and 324–326 each bind substrate; that span reads KVN.

The protein belongs to the class-II fumarase/aspartase family. Fumarase subfamily. Homotetramer.

It localises to the cytoplasm. The catalysed reaction is (S)-malate = fumarate + H2O. It functions in the pathway carbohydrate metabolism; tricarboxylic acid cycle; (S)-malate from fumarate: step 1/1. Its function is as follows. Involved in the TCA cycle. Catalyzes the stereospecific interconversion of fumarate to L-malate. The chain is Fumarate hydratase class II from Rickettsia conorii (strain ATCC VR-613 / Malish 7).